A 31-amino-acid chain; its full sequence is Cytochrome b6-f complex subunit 6 (31 aa).

The helical transmembrane segment at 4–24 (ITSYFGFLLAALTITSVLFIG) threads the bilayer.

This sequence belongs to the PetL family. The 4 large subunits of the cytochrome b6-f complex are cytochrome b6, subunit IV (17 kDa polypeptide, PetD), cytochrome f and the Rieske protein, while the 4 small subunits are PetG, PetL, PetM and PetN. The complex functions as a dimer.

The protein localises to the plastid. The protein resides in the chloroplast thylakoid membrane. Functionally, component of the cytochrome b6-f complex, which mediates electron transfer between photosystem II (PSII) and photosystem I (PSI), cyclic electron flow around PSI, and state transitions. PetL is important for photoautotrophic growth as well as for electron transfer efficiency and stability of the cytochrome b6-f complex. The protein is Cytochrome b6-f complex subunit 6 of Arabidopsis thaliana (Mouse-ear cress).